Here is a 349-residue protein sequence, read N- to C-terminus: Putative methylesterase 12, chloroplastic (349 aa).

A chloroplast-targeting transit peptide spans 1 to 77; sequence MGNRVICMKK…GSTSSRRGTL (77 aa). The segment at 61–80 is disordered; that stretch reads GSMSRRIGSTSSRRGTLSDS. Catalysis depends on Ser173, which acts as the Acyl-ester intermediate. Catalysis depends on charge relay system residues Asp300 and His328.

It belongs to the AB hydrolase superfamily. Methylesterase family.

The protein localises to the plastid. It localises to the chloroplast. In terms of biological role, putative methylesterase. The polypeptide is Putative methylesterase 12, chloroplastic (Arabidopsis thaliana (Mouse-ear cress)).